The following is a 192-amino-acid chain: dCTP deaminase, dUMP-forming (192 aa).

Residues 101–106 (KSSLGR), D119, 127–129 (TLE), Q148, Y162, and Q174 each bind dCTP. Catalysis depends on E129, which acts as the Proton donor/acceptor. Residues 171–192 (YQGQRGPTPSRSWQSWHTWPTR) are disordered.

This sequence belongs to the dCTP deaminase family. As to quaternary structure, homotrimer.

The catalysed reaction is dCTP + 2 H2O = dUMP + NH4(+) + diphosphate. It participates in pyrimidine metabolism; dUMP biosynthesis; dUMP from dCTP: step 1/1. Functionally, bifunctional enzyme that catalyzes both the deamination of dCTP to dUTP and the hydrolysis of dUTP to dUMP without releasing the toxic dUTP intermediate. This Salinispora arenicola (strain CNS-205) protein is dCTP deaminase, dUMP-forming.